The primary structure comprises 320 residues: o-succinylbenzoate synthase (320 aa).

Lysine 133 acts as the Proton donor in catalysis. The Mg(2+) site is built by aspartate 161, glutamate 190, and aspartate 213. The Proton acceptor role is filled by lysine 235.

Belongs to the mandelate racemase/muconate lactonizing enzyme family. MenC type 1 subfamily. A divalent metal cation is required as a cofactor.

The enzyme catalyses (1R,6R)-6-hydroxy-2-succinyl-cyclohexa-2,4-diene-1-carboxylate = 2-succinylbenzoate + H2O. It participates in quinol/quinone metabolism; 1,4-dihydroxy-2-naphthoate biosynthesis; 1,4-dihydroxy-2-naphthoate from chorismate: step 4/7. The protein operates within quinol/quinone metabolism; menaquinone biosynthesis. Converts 2-succinyl-6-hydroxy-2,4-cyclohexadiene-1-carboxylate (SHCHC) to 2-succinylbenzoate (OSB). The protein is o-succinylbenzoate synthase of Salmonella agona (strain SL483).